A 199-amino-acid chain; its full sequence is Probable chemoreceptor glutamine deamidase CheD (199 aa).

It belongs to the CheD family.

It catalyses the reaction L-glutaminyl-[protein] + H2O = L-glutamyl-[protein] + NH4(+). In terms of biological role, probably deamidates glutamine residues to glutamate on methyl-accepting chemotaxis receptors (MCPs), playing an important role in chemotaxis. In Nitratidesulfovibrio vulgaris (strain ATCC 29579 / DSM 644 / CCUG 34227 / NCIMB 8303 / VKM B-1760 / Hildenborough) (Desulfovibrio vulgaris), this protein is Probable chemoreceptor glutamine deamidase CheD.